The primary structure comprises 617 residues: Hemagglutinin glycoprotein (617 aa).

Residues 1–37 (MSPQRDRINAFYKDNPHPKGSRIVINREHLMIDRPYV) are Intravirion-facing. The tract at residues 1–154 (MSPQRDRINA…RIKLDYDQYC (154 aa)) is stalk. Residues 38-58 (LLAVLFVMFLSLIGLLAIAGI) traverse the membrane as a helical; Signal-anchor for type II membrane protein segment. Residues 59–617 (RLHRAAIYTA…VTREDGTNRR (559 aa)) lie on the Virion surface side of the membrane. N-linked (GlcNAc...) asparagine; by host glycosylation is found at Asn-168, Asn-187, Asn-200, Asn-215, and Asn-238. Disulfide bonds link Cys-188/Cys-606, Cys-287/Cys-300, Cys-381/Cys-494, Cys-386/Cys-394, and Cys-570/Cys-579. The interval 458–543 (PMKNLALGVI…VEHAVVYYVY (86 aa)) is interaction with host NECTIN4 receptor.

It belongs to the paramyxoviruses hemagglutinin-neuraminidase family. Non-sialidase subfamily. Homodimer; disulfide-linked. Further forms homotetramer (dimer of dimers). Interacts (via C-terminus) with human NECTIN4 (via N-terminus); this interaction allows attachment to the respiratory epithelium and viral entry. Interacts (via C-terminus) with human SLAMF1/CD150 (via N-terminus); this interaction allows attachment and viral entry into the CD150-expressing immune cells. Interacts with human CD46 antigen; this interaction allows attachment and viral entry of vaccine and laboratory-adapted strains.

The protein resides in the virion membrane. Its subcellular location is the host cell membrane. Its function is as follows. Attaches the virus to the human SLAMF1/CD150 receptor for entry into host dendritic cells, macrophages, activated memory T cells and naive or memory B cells, thereby explaining the long immunosuppression that follows infection. In the respiratory airways, binds to the NECTIN4 receptor for entry into the host cell. Binding of H protein to the receptor induces a conformational change that allows the F protein to trigger virion/cell membranes fusion. The vaccine and laboratory-adapted strains use host CD46 as an alternate receptor. The high degree of interaction between H and CD46 results in down-regulation of the latter from the surface of infected cells, rendering them more sensitive to c3b-mediated complement lysis. The chain is Hemagglutinin glycoprotein (H) from Homo sapiens (Human).